The primary structure comprises 664 residues: E3 ubiquitin-protein ligase RNF139 (664 aa).

Ala-2 carries the N-acetylalanine modification. The next 12 helical transmembrane spans lie at 51 to 71 (IVLQ…VLIL), 85 to 105 (AFLL…HIDF), 125 to 145 (SLWM…VTLL), 154 to 174 (LIIL…PLHI), 178 to 198 (LVFT…AVKL), 293 to 313 (GMSA…LAFI), 323 to 343 (LGFV…LSGL), 356 to 376 (MCLL…PVLM), 390 to 410 (FPVL…SYVL), 420 to 440 (LFAA…SLTV), 469 to 489 (SIIV…TMMF), and 495 to 512 (IRAF…YLQA). An RING-type; atypical zinc finger spans residues 547–586 (CAICYHEFTTSARITPCNHYFHALCLRKWLYIQDTCPMCH). Residues 599–610 (SNVSNNNGFTPP) are compositionally biased toward polar residues. A disordered region spans residues 599–664 (SNVSNNNGFT…AAEEFNDDTD (66 aa)). A compositionally biased stretch (basic and acidic residues) spans 616-628 (EAVREAAAESDRE). Over residues 629–639 (LNEDDSTDCDD) the composition is skewed to acidic residues. Phosphoserine is present on Ser-634. Phosphothreonine occurs at positions 635 and 663.

As to quaternary structure, interacts with VHL. Interacts with MHC class I and HM13. Component of SCAP-SREBP complex composed of SREBF2, SCAP and RNF139; the complex hampers the interaction between SCAP and SEC24B, thereby reducing SREBF2 proteolytic processing. Interacts with SREBF2 (via C-terminal domain). Interacts with SCAP; the interaction inhibits the interaction of SCAP with SEC24B and hampering the ER to Golgi transport of the SCAP-SREBP complex. Interacts with SEC24B. Interacts with INSIG1 and INSIG2. Interacts with EIF3F and EIF3H; the interaction leads to protein translation inhibitions in a ubiquitination-dependent manner. Interacts with XBP1; the interaction induces ubiquitination and degradation of XBP1. Interacts with AUP1, AMFR and UBE2G2; interaction with AUP1 facilitates interaction of RNF139 with ubiquitin-conjugating enzyme UBE2G2 and ubiquitin ligase AMFR/gp78, leading to sterol-induced ubiquitination of HMGCR and its subsequent proteasomal degradation. Autoubiquitinated. Ubiquitination is induced by sterol and leads to ist degradation via the ubiquitin-proteasome pathway.

The protein resides in the endoplasmic reticulum membrane. It carries out the reaction S-ubiquitinyl-[E2 ubiquitin-conjugating enzyme]-L-cysteine + [acceptor protein]-L-lysine = [E2 ubiquitin-conjugating enzyme]-L-cysteine + N(6)-ubiquitinyl-[acceptor protein]-L-lysine.. The protein operates within protein modification; protein ubiquitination. Functionally, E3-ubiquitin ligase; acts as a negative regulator of cell proliferation through mechanisms involving G2/M arrest and cell death. Required for MHC class I ubiquitination in cells expressing the cytomegalovirus protein US2 before dislocation from the endoplasmic reticulum (ER). Affects SREBP processing by hindering the SREBP-SCAP complex translocation from the ER to the Golgi, thereby reducing SREBF2 target gene expression. Involved in the sterol-accelerated degradation of HMGCR. This is achieved through binding to INSIG1 and/or INSIG2 at the ER membrane. In addition, interaction of RNF139 with AUP1 facilitates interaction of RNF139 with ubiquitin-conjugating enzyme UBE2G2 and ubiquitin ligase AMFR, leading to ubiquitination of HMGCR. The ubiquitinated HMGCR is then released from the ER by the complex into the cytosol for subsequent destruction. Required for INSIG1 ubiquitination. May be required for EIF3 complex ubiquitination. The sequence is that of E3 ubiquitin-protein ligase RNF139 (RNF139) from Pongo abelii (Sumatran orangutan).